The primary structure comprises 397 residues: Serpin-Z7 (397 aa).

Ala-2 bears the N-acetylalanine mark. The RCL stretch occupies residues 344-368 (GTKAGAATGDVIVDRSLPIRMDFVA).

The protein belongs to the serpin family. In terms of tissue distribution, highly expressed in endosperm, at intermediate level in embryo and at lower levels in roots.

Inhibits chymotrypsin in vitro. The protein is Serpin-Z7 (PAZ7) of Hordeum vulgare (Barley).